The chain runs to 487 residues: ATP synthase subunit beta (487 aa).

Residue 164–171 (GGAGVGKT) participates in ATP binding.

It belongs to the ATPase alpha/beta chains family. F-type ATPases have 2 components, CF(1) - the catalytic core - and CF(0) - the membrane proton channel. CF(1) has five subunits: alpha(3), beta(3), gamma(1), delta(1), epsilon(1). CF(0) has four main subunits: a(1), b(1), b'(1) and c(9-12).

Its subcellular location is the cellular thylakoid membrane. It catalyses the reaction ATP + H2O + 4 H(+)(in) = ADP + phosphate + 5 H(+)(out). In terms of biological role, produces ATP from ADP in the presence of a proton gradient across the membrane. The catalytic sites are hosted primarily by the beta subunits. This is ATP synthase subunit beta from Synechococcus sp. (strain WH7803).